A 227-amino-acid polypeptide reads, in one-letter code: Cytidylate kinase (227 aa).

Residue 12–20 (GPSGAGKGT) coordinates ATP.

Belongs to the cytidylate kinase family. Type 1 subfamily.

Its subcellular location is the cytoplasm. It catalyses the reaction CMP + ATP = CDP + ADP. The enzyme catalyses dCMP + ATP = dCDP + ADP. The protein is Cytidylate kinase of Shigella boydii serotype 18 (strain CDC 3083-94 / BS512).